The following is a 785-amino-acid chain: LPS-assembly protein LptD (785 aa).

Positions 1-58 are cleaved as a signal peptide; sequence MSCSCLCMSLYRGADRIGRFYTAHCPQDMALCMHRQKLNPLALALAAAFALNAPAALA.

This sequence belongs to the LptD family. In terms of assembly, component of the lipopolysaccharide transport and assembly complex. Interacts with LptE and LptA.

Its subcellular location is the cell outer membrane. Functionally, together with LptE, is involved in the assembly of lipopolysaccharide (LPS) at the surface of the outer membrane. This Chromobacterium violaceum (strain ATCC 12472 / DSM 30191 / JCM 1249 / CCUG 213 / NBRC 12614 / NCIMB 9131 / NCTC 9757 / MK) protein is LPS-assembly protein LptD.